The sequence spans 235 residues: Large ribosomal subunit protein uL1 (235 aa).

Belongs to the universal ribosomal protein uL1 family. As to quaternary structure, part of the 50S ribosomal subunit.

Functionally, binds directly to 23S rRNA. The L1 stalk is quite mobile in the ribosome, and is involved in E site tRNA release. In terms of biological role, protein L1 is also a translational repressor protein, it controls the translation of the L11 operon by binding to its mRNA. This chain is Large ribosomal subunit protein uL1, found in Fervidobacterium nodosum (strain ATCC 35602 / DSM 5306 / Rt17-B1).